The sequence spans 346 residues: MKNILRAMVILLIICGTYVLFIQYGSVPEKKSNDSEPQVSNEEAQSGKRIHMPTSGLLSFMGKHADEVTKKLGEPERIDPSAYDYDWWVYNQGKDQYIQIGVLNNKVVTLFASGNDINAKPFKIGESTGEVFKTTQVAPFVNVEYKGNSYRFEFSEEDINTRPTVKVGKMYVQLYMDKFEGKLSSIRAFDAQTFVKQRPYEVVYRGELIKPKAVSDEKWKKIQTTSEKQILDLTNVIRVKHGLAKLEWDQPTAEVAFGHSEDMKENNYFSHVSKKYGSLKDRLEEGHVDFQQAGENIAYNYVDGPAAVEGWLNSEGHRKALLNSDYTHLGVGVDRKYYTQNFIKRW.

A helical transmembrane segment spans residues 7–27 (AMVILLIICGTYVLFIQYGSV). The segment at 29 to 48 (EKKSNDSEPQVSNEEAQSGK) is disordered. Residues 35-44 (SEPQVSNEEA) are compositionally biased toward polar residues. The 112-residue stretch at 231–342 (LDLTNVIRVK…VDRKYYTQNF (112 aa)) folds into the SCP domain.

Its subcellular location is the cell membrane. This is an uncharacterized protein from Bacillus subtilis (strain 168).